The primary structure comprises 325 residues: MSDLTHNDIQPYQAHPELVRALGRVAVFMGGDSAEREVSLKSGKAVLAALQSAGIDAVGRDIQGCLLRTVDEPDFDRVFIALHGRGGEDGTLQAILGQAGIPYTGSEVLASALAMDKLRTKYVFEGCGLPTPAFRAMTSVGEAEGIVAALGTPLSVKPAHEGSSIGIRKVNSAAELAEAYEAAARLDDLVLVEQWIEGPEFTVSLLQDKALPAIGLSTDHAFYDYDAKYLADDTRYRIPCGLAPDDELRLQHLALDAFRVLGCRTWGRVDIMQDRAGEFWLLEVNTVPGMTDHSLVPMAAKAAGISFEELVVRILRDTLAEGIDA.

One can recognise an ATP-grasp domain in the interval Lys-121 to Arg-316. Val-147–Thr-202 is a binding site for ATP. Positions 270, 283, and 285 each coordinate Mg(2+).

This sequence belongs to the D-alanine--D-alanine ligase family. It depends on Mg(2+) as a cofactor. The cofactor is Mn(2+).

It localises to the cytoplasm. The enzyme catalyses 2 D-alanine + ATP = D-alanyl-D-alanine + ADP + phosphate + H(+). It participates in cell wall biogenesis; peptidoglycan biosynthesis. In terms of biological role, cell wall formation. The chain is D-alanine--D-alanine ligase from Marinobacter nauticus (strain ATCC 700491 / DSM 11845 / VT8) (Marinobacter aquaeolei).